Reading from the N-terminus, the 317-residue chain is MSRPFASAPARGHRQGQEERERRSEEGGSVPGPRTFQVVSPVVTPGQEATLFRVEAVEEGEARHEGDVAGIGREFQLLAEDIVEEVEVVADEEQEQRPSQELEEKTVEEQGQERPGGPCERQELDALQALAALQVELSSEREQNRRAYVQFMRKNHQRRKRHLARRSTIIQGIPGFWAKAIMSHPQVSVLISDQDQDFLGYMMDLKVQVRSHPPSRCKLIFSFRDNPYFLNSVIIKEYYLDITGYRARRSTPVHWFWDFERGAPSRRRDTRSLNFLNWLSGHNGPESNRIAEIISEDVWDDPLKYYLREEGSSVRDN.

2 disordered regions span residues 1–39 and 91–118; these read MSRPFASAPARGHRQGQEERERRSEEGGSVPGPRTFQVV and DEEQEQRPSQELEEKTVEEQGQERPGGP. Composition is skewed to basic and acidic residues over residues 15 to 26 and 95 to 112; these read QGQEERERRSEE and EQRPSQELEEKTVEEQGQ.

It belongs to the nucleosome assembly protein (NAP) family. Post-translationally, phosphorylated. In terms of tissue distribution, testis. Probably in spermatogonia.

It localises to the cytoplasm. It is found in the nucleus. Functionally, may be involved in sperm differentiation and proliferation. The protein is Testis-specific Y-encoded protein 1 (TSPY1) of Bos taurus (Bovine).